The chain runs to 85 residues: Sec-independent protein translocase protein TatA (85 aa).

The chain crosses the membrane as a helical span at residues 7–27; the sequence is VFGSLGWTEILLILFIALLLF. Positions 50–85 are disordered; the sequence is LTGESDDSSQQISQEQERSVPKEETKTSKSKKSKSA. Positions 64-76 are enriched in basic and acidic residues; the sequence is EQERSVPKEETKT.

It belongs to the TatA/E family. Forms a complex with TatC.

It is found in the cell inner membrane. In terms of biological role, part of the twin-arginine translocation (Tat) system that transports large folded proteins containing a characteristic twin-arginine motif in their signal peptide across membranes. TatA could form the protein-conducting channel of the Tat system. This Leptospira interrogans serogroup Icterohaemorrhagiae serovar Lai (strain 56601) protein is Sec-independent protein translocase protein TatA.